The sequence spans 259 residues: Electron transfer flavoprotein subunit beta (259 aa).

The protein belongs to the ETF beta-subunit/FixA family. As to quaternary structure, heterodimer of an alpha and a beta subunit. It depends on FAD as a cofactor. AMP serves as cofactor.

The electron transfer flavoprotein serves as a specific electron acceptor for other dehydrogenases. It transfers the electrons to the main respiratory chain via ETF-ubiquinone oxidoreductase (ETF dehydrogenase). This Clostridium acetobutylicum (strain ATCC 824 / DSM 792 / JCM 1419 / IAM 19013 / LMG 5710 / NBRC 13948 / NRRL B-527 / VKM B-1787 / 2291 / W) protein is Electron transfer flavoprotein subunit beta (etfB).